Consider the following 459-residue polypeptide: Putrescine aminotransferase (459 aa).

Residues Gly-150–Thr-151 and Gln-274 each bind pyridoxal 5'-phosphate. Lys-300 is modified (N6-(pyridoxal phosphate)lysine). Residue Thr-332 participates in pyridoxal 5'-phosphate binding.

The protein belongs to the class-III pyridoxal-phosphate-dependent aminotransferase family. Putrescine aminotransferase subfamily. Requires pyridoxal 5'-phosphate as cofactor.

The enzyme catalyses an alkane-alpha,omega-diamine + 2-oxoglutarate = an omega-aminoaldehyde + L-glutamate. It catalyses the reaction putrescine + 2-oxoglutarate = 1-pyrroline + L-glutamate + H2O. The catalysed reaction is cadaverine + 2-oxoglutarate = 5-aminopentanal + L-glutamate. Its pathway is amine and polyamine degradation; putrescine degradation; 4-aminobutanal from putrescine (transaminase route): step 1/1. Its function is as follows. Catalyzes the aminotransferase reaction from putrescine to 2-oxoglutarate, leading to glutamate and 4-aminobutanal, which spontaneously cyclizes to form 1-pyrroline. This is the first step in one of two pathways for putrescine degradation, where putrescine is converted into 4-aminobutanoate (gamma-aminobutyrate or GABA) via 4-aminobutanal. Also functions as a cadaverine transaminase in a a L-lysine degradation pathway to succinate that proceeds via cadaverine, glutarate and L-2-hydroxyglutarate. This is Putrescine aminotransferase from Salmonella choleraesuis (strain SC-B67).